Reading from the N-terminus, the 440-residue chain is Ribulose bisphosphate carboxylase large chain (440 aa).

Lysine 4 bears the N6,N6,N6-trimethyllysine mark. Substrate contacts are provided by asparagine 113 and threonine 163. The active-site Proton acceptor is the lysine 165. Lysine 167 is a binding site for substrate. Mg(2+)-binding residues include lysine 191, aspartate 193, and glutamate 194. Lysine 191 carries the N6-carboxylysine modification. Catalysis depends on histidine 284, which acts as the Proton acceptor. Residues arginine 285, histidine 317, and serine 369 each contribute to the substrate site.

This sequence belongs to the RuBisCO large chain family. Type I subfamily. In terms of assembly, heterohexadecamer of 8 large chains and 8 small chains; disulfide-linked. The disulfide link is formed within the large subunit homodimers. Requires Mg(2+) as cofactor. Post-translationally, the disulfide bond which can form in the large chain dimeric partners within the hexadecamer appears to be associated with oxidative stress and protein turnover.

The protein resides in the plastid. The protein localises to the chloroplast. The enzyme catalyses 2 (2R)-3-phosphoglycerate + 2 H(+) = D-ribulose 1,5-bisphosphate + CO2 + H2O. It catalyses the reaction D-ribulose 1,5-bisphosphate + O2 = 2-phosphoglycolate + (2R)-3-phosphoglycerate + 2 H(+). In terms of biological role, ruBisCO catalyzes two reactions: the carboxylation of D-ribulose 1,5-bisphosphate, the primary event in carbon dioxide fixation, as well as the oxidative fragmentation of the pentose substrate in the photorespiration process. Both reactions occur simultaneously and in competition at the same active site. The chain is Ribulose bisphosphate carboxylase large chain from Pteris vittata (Chinese ladder brake).